The chain runs to 236 residues: Outer membrane protein P.III (236 aa).

The N-terminal stretch at 1–22 is a signal peptide; it reads MTKQLKLSALFVALLASGTAVA. Tandem repeats lie at residues 69 to 70, 71 to 72, 73 to 74, and 75 to 76. Residues 69–76 are 4 X 2 AA tandem repeats of X-P; it reads VPEPEPAP. The OmpA-like domain maps to 86-223; it reads YVDETISLSA…RVDVKIRSIV (138 aa). Cys-185 and Cys-208 are joined by a disulfide.

This sequence belongs to the outer membrane OOP (TC 1.B.6) superfamily.

Its subcellular location is the cell outer membrane. The polypeptide is Outer membrane protein P.III (Neisseria gonorrhoeae).